We begin with the raw amino-acid sequence, 562 residues long: AT-rich interactive domain-containing protein 1 (562 aa).

One can recognise an ARID domain in the interval 43 to 136; sequence KELISLFRPL…YLDAFGRWLN (94 aa). An ELM2 domain is found at 358–448; the sequence is PCALVGSKFQ…KLELGPAFYM (91 aa).

It is found in the nucleus. The protein is AT-rich interactive domain-containing protein 1 (ARID1) of Arabidopsis thaliana (Mouse-ear cress).